Consider the following 461-residue polypeptide: Cysteine--tRNA ligase (461 aa).

Zn(2+) is bound at residue Cys28. Residues 30 to 40 carry the 'HIGH' region motif; it reads VTIYDLCHIGH. Zn(2+) contacts are provided by Cys209, His234, and Glu238. A 'KMSKS' region motif is present at residues 266 to 270; the sequence is KMSKS. ATP is bound at residue Lys269.

It belongs to the class-I aminoacyl-tRNA synthetase family. Monomer. Zn(2+) is required as a cofactor.

Its subcellular location is the cytoplasm. It carries out the reaction tRNA(Cys) + L-cysteine + ATP = L-cysteinyl-tRNA(Cys) + AMP + diphosphate. This is Cysteine--tRNA ligase from Hamiltonella defensa subsp. Acyrthosiphon pisum (strain 5AT).